The chain runs to 795 residues: Multiple C2 domain and transmembrane region protein 12 (795 aa).

C2 domains follow at residues 24 to 142 (RNPR…PQWY), 180 to 298 (VCAS…SAPA), and 341 to 463 (YSSD…TCSY). Residues asparagine 57, aspartate 109, and asparagine 113 each contribute to the Ca(2+) site. A run of 4 helical transmembrane segments spans residues 590–610 (CTPK…EYYI), 612–632 (WLVT…VILL), 730–750 (FVLI…CLGW), and 752–772 (LHVR…LPWF).

Belongs to the MCTP family. Requires Ca(2+) as cofactor. Expressed in root vascular tissues and meristems. Observed in flowers.

The protein resides in the endoplasmic reticulum membrane. May function as a signaling molecule by regulating the trafficking of other regulators. This Arabidopsis thaliana (Mouse-ear cress) protein is Multiple C2 domain and transmembrane region protein 12.